The primary structure comprises 62 residues: Large ribosomal subunit protein bL33 (62 aa).

The protein belongs to the bacterial ribosomal protein bL33 family.

The protein is Large ribosomal subunit protein bL33 of Cyanothece sp. (strain PCC 7425 / ATCC 29141).